Reading from the N-terminus, the 493-residue chain is Transcript termination protein A18 (493 aa).

In terms of domain architecture, Helicase ATP-binding spans 100-256; the sequence is MIESKRPLYI…NSIINIAKLS (157 aa). 113-120 serves as a coordination point for ATP; it reads LACGFGKT. The DESH box signature appears at 206 to 209; sequence DESH.

The protein belongs to the helicase family. Poxviruses subfamily. In terms of assembly, interacts with G2. Might be part of a transcription complex composed at least of G2, A18, and H5.

The protein resides in the virion. In terms of biological role, DNA helicase which seems to act as a postreplicative transcription termination factor. Involved in ATP-dependent release of nascent RNA. Forms a stable complex with single-stranded DNA, and to a lesser extent RNA. This chain is Transcript termination protein A18, found in Homo sapiens (Human).